Here is a 457-residue protein sequence, read N- to C-terminus: NAC domain-containing protein 69 (457 aa).

Residues 4–153 enclose the NAC domain; the sequence is DLVGYRFYPT…NYVICQVMYK (150 aa). The DNA-binding element occupies 107–159; it reads IGIKKTLVYYEGRVPKGVWTPWVMHEYHITCLPQDQRNYVICQVMYKGEDGDV. Disordered regions lie at residues 158 to 180 and 302 to 332; these read DVPS…SNTV and DSNS…SNRQ. Polar residues predominate over residues 162–180; it reads GGNNSSEPSQSLVSDSNTV. A compositionally biased stretch (low complexity) spans 302–311; sequence DSNSDAESIS. The segment covering 312–332 has biased composition (polar residues); that stretch reads ATSYQGTSSPGDDSVGSSNRQ. The helical transmembrane segment at 421–441 threads the bilayer; the sequence is IYLMRMIIGFILLLALISNII.

Its subcellular location is the membrane. It is found in the nucleus. Its function is as follows. Transcription activator activated by proteolytic cleavage through regulated intramembrane proteolysis (RIP). Involved in salt stress response during seed germination and seedling growth. Binds the auxin-responsive IAA30 gene promoter and may serve as a molecular link that interconnects a developmental feedback loop of auxin signaling with a salt signal transduction pathway during seed germination. This Arabidopsis thaliana (Mouse-ear cress) protein is NAC domain-containing protein 69 (NAC69).